Here is a 601-residue protein sequence, read N- to C-terminus: Multidrug and toxin extrusion protein 2 (601 aa).

Over 1–62 (MNTAFAGFDE…PRGFWDEARA (62 aa)) the chain is Cytoplasmic. A helical membrane pass occupies residues 63-83 (LFVLSGPLFLFQVLNFLTYVV). The Extracellular segment spans residues 84–95 (GTVFCGHLGKVE). A helical transmembrane segment spans residues 96-116 (LASVTLGVAFVNVCGVSVGAG). Over 117-145 (LSSACDTLMSQSFGSPNKKHVGVILQRGS) the chain is Cytoplasmic. Residues 146 to 166 (LILLLCCLPCWALFLNTQHIL) traverse the membrane as a helical segment. Over 167 to 182 (LLFRQDPAVSRLTQDY) the chain is Extracellular. The chain crosses the membrane as a helical span at residues 183–203 (AMIFIPGLPAIFLYSLLAKYL). Over 204-212 (QNQGIVWPQ) the chain is Cytoplasmic. The helical transmembrane segment at 213 to 233 (VLSGVVGNCVNGVANYALVSV) threads the bilayer. Over 234–241 (LNLGVRGS) the chain is Extracellular. A helical transmembrane segment spans residues 242–262 (AYANTISQFVQAAFLFLHIVL). Topologically, residues 263–281 (KKLHLETWEGWSSQCLRDW) are cytoplasmic. A helical membrane pass occupies residues 282-301 (GPFLSLAIPSMLMMCVEWWA). Topologically, residues 302-320 (YEIGSFLMGLLGVVDLSGQ) are extracellular. A helical membrane pass occupies residues 321-341 (AIIYEVATVVYMIPMGLGMAV). The Cytoplasmic portion of the chain corresponds to 342 to 361 (CVRVGTALGAADTLQAKRSA). Residues 362 to 382 (VSGLLCTAGTSLVVGTLLGLL) form a helical membrane-spanning segment. Residues 383–402 (NSQLGYIFTSDEEVIALVNQ) are Extracellular-facing. The helical transmembrane segment at 403–423 (VLPIYIVFQLVEAVCCVFGGV) threads the bilayer. Topologically, residues 424–437 (LRGTGKQAFGAIVN) are cytoplasmic. A helical membrane pass occupies residues 438–458 (AIMYYIVGLPLGIVLTFVVGM). Residue Arg459 is a topological domain, extracellular. The chain crosses the membrane as a helical span at residues 460-480 (IMGLWLGMLTCIFLAAVTFVV). The Cytoplasmic portion of the chain corresponds to 481–577 (YAVQLDWKLA…LSVRQLLFRR (97 aa)). Residues 578-598 (GAALAASVAVLMAGLLVRVLT) traverse the membrane as a helical segment. Residues 599-601 (TGY) lie on the Extracellular side of the membrane.

It belongs to the multi antimicrobial extrusion (MATE) (TC 2.A.66.1) family. Expressed in renal cortical tissues.

Its subcellular location is the cell membrane. It is found in the apical cell membrane. The catalysed reaction is thiamine(out) + H(+)(in) = thiamine(in) + H(+)(out). The enzyme catalyses estrone 3-sulfate(in) + H(+)(out) = estrone 3-sulfate(out) + H(+)(in). It carries out the reaction creatinine(in) + H(+)(out) = creatinine(out) + H(+)(in). In terms of biological role, multidrug efflux pump that functions as a H(+)/organic cation antiporter. Mediates the efflux of cationic compounds, such as the model cations, tetraethylammonium (TEA) and 1-methyl-4-phenylpyridinium (MPP+), the platinum-based drug oxaliplatin or weak bases that are positively charged at physiological pH, cimetidine or the antidiabetic drug metformin. Mediates the efflux of the endogenous compounds creatinine, thiamine and estrone-3-sulfate. Plays a physiological role in the excretion of drugs, toxins and endogenous metabolites through the kidney. This Oryctolagus cuniculus (Rabbit) protein is Multidrug and toxin extrusion protein 2 (SLC47A2).